The sequence spans 543 residues: Protein GPR108 (543 aa).

A signal peptide spans 1–32 (MAVSERRGLGRGSPAEWGQRLLLVLLLGGCSG). N-linked (GlcNAc...) asparagine glycans are attached at residues Asn-57 and Asn-109. The interval 149-186 (SKPGLPKPQATVPRKVDGGGTSAASKPKSTPAVIQGPS) is disordered. 3 N-linked (GlcNAc...) asparagine glycosylation sites follow: Asn-200, Asn-204, and Asn-228. Transmembrane regions (helical) follow at residues 263-283 (LYMV…SILC), 292-312 (IHWL…FHSI), 336-356 (LLKG…WAFI), 367-387 (VFGI…IIES), 401-421 (ILFL…VWSI), 449-469 (VMVI…QVAV), and 473-493 (WQWL…VLTG). N-linked (GlcNAc...) asparagine glycosylation is present at Asn-534.

This sequence belongs to the LU7TM family.

Its subcellular location is the golgi apparatus. The protein localises to the cis-Golgi network membrane. The protein resides in the trans-Golgi network membrane. It localises to the golgi apparatus membrane. Functionally, may play a role in intracellular immune modulation by activating NF-kappaB response and attenuating Toll-like-receptor response. (Microbial infection) Plays an essential function in adeno-associated virus (AAV) transduction across multiple serotypes except AAV5. May play a critical role in mediating the endosomal virus escape or in the AAV virions trafficking from endosomes to the nucleus. The protein is Protein GPR108 of Homo sapiens (Human).